The following is a 784-amino-acid chain: Toll-like receptor 2 (784 aa).

The first 20 residues, 1 to 20 (MPRALWTAWVWAVIILSMEG), serve as a signal peptide directing secretion. The Extracellular portion of the chain corresponds to 21–587 (ASHQASSLSC…ARLSLSECHR (567 aa)). A disulfide bridge connects residues C30 and C36. LRR repeat units lie at residues 54–77 (VKSL…RCVN), 78–101 (LKTL…HLRN), 102–125 (LEYL…SLYA), 126–150 (LKFL…HLPN), 151–175 (LRTL…GLIF), 176–199 (LEEL…SIQN), 200–223 (ISHL…IVSS), 224–250 (LDCL…MNTS), 251–278 (VKKL…YVSG), 279–308 (ILEV…HLGN), 309–337 (VETL…LTGK), 338–361 (VKRV…HLKS), 362–388 (LEYL…AWPF), 389–414 (LQTL…TLKN), 415–437 (LNNL…WPGK), 438–457 (MKQL…CLPQ), 458–478 (TLEI…ILPQ), 479–500 (LKEL…FLPV), and 501–524 (LSVM…SFPQ). Residue N114 is glycosylated (N-linked (GlcNAc...) asparagine). N199 carries N-linked (GlcNAc...) asparagine glycosylation. N-linked (GlcNAc...) asparagine glycosylation is present at N248. The cysteines at positions 353 and 382 are disulfide-linked. An intrachain disulfide couples C432 to C454. The N-linked (GlcNAc...) asparagine glycan is linked to N442. The LRRCT domain occupies 525–579 (LKALEAGGNNFICSCDFLSFTQGQQALARVLVDWPDGYRCDAPSHVRGQRVQDAR). A helical transmembrane segment spans residues 588–608 (AAVVSAVCCALFLLLLLTGVL). Residues 609 to 784 (CHRFHGLWYM…WLNLRAAIRS (176 aa)) are Cytoplasmic-facing. In terms of domain architecture, TIR spans 639 to 782 (LCYDAFVSYS…AFWLNLRAAI (144 aa)). A Glycyl lysine isopeptide (Lys-Gly) (interchain with G-Cter in ubiquitin) cross-link involves residue K754. Positions 761–778 (YLEWPTDETQQEAFWLNL) match the ATG16L1-binding motif motif.

Belongs to the Toll-like receptor family. In terms of assembly, interacts with LY96, TLR1 and TLR6 (via extracellular domain). TLR2 seems to exist in heterodimers with either TLR1 or TLR6 before stimulation by the ligand. The heterodimers form bigger oligomers in response to their corresponding ligands as well as further heterotypic associations with other receptors such as CD14 and/or CD36. Binds MYD88 (via TIR domain). Interacts with TICAM1. Interacts with CNPY3. Interacts with ATG16L1. Interacts with PPP1R11. Interacts with TICAM2. Interacts with TIRAP. Post-translationally, ubiquitinated at Lys-754 by PPP1R11, leading to its degradation. Deubiquitinated by USP2. In terms of processing, glycosylation of Asn-442 is critical for secretion of the N-terminal ectodomain of TLR2.

It localises to the membrane. The protein resides in the cytoplasmic vesicle. It is found in the phagosome membrane. The protein localises to the membrane raft. In terms of biological role, cooperates with LY96 to mediate the innate immune response to bacterial lipoproteins and other microbial cell wall components. Cooperates with TLR1 or TLR6 to mediate the innate immune response to bacterial lipoproteins or lipopeptides. Acts via MYD88 and TRAF6, leading to NF-kappa-B activation, cytokine secretion and the inflammatory response. May also promote apoptosis in response to lipoproteins. Forms activation clusters composed of several receptors depending on the ligand, these clusters trigger signaling from the cell surface and subsequently are targeted to the Golgi in a lipid-raft dependent pathway. Forms the cluster TLR2:TLR6:CD14:CD36 in response to diacylated lipopeptides and TLR2:TLR1:CD14 in response to triacylated lipopeptides. The chain is Toll-like receptor 2 (TLR2) from Capra hircus (Goat).